The sequence spans 226 residues: Cell division protein SepF (226 aa).

The tract at residues 20-116 (RAYDDAGYDK…ESLTYHTRDN (97 aa)) is disordered. Basic and acidic residues predominate over residues 22–44 (YDDAGYDKGGYRESRYRSSRYSE). A compositionally biased stretch (acidic residues) spans 45–56 (DFGDEDDEDEEA). Residues 62 to 95 (RRGDRSRLERAAARSGDVDHNVEGEQPERVERAS) are compositionally biased toward basic and acidic residues. The segment covering 97–111 (RSITRSAEPSESLTY) has biased composition (polar residues).

The protein belongs to the SepF family. In terms of assembly, homodimer. Interacts with FtsZ.

The protein localises to the cytoplasm. Functionally, cell division protein that is part of the divisome complex and is recruited early to the Z-ring. Probably stimulates Z-ring formation, perhaps through the cross-linking of FtsZ protofilaments. Its function overlaps with FtsA. In Salinispora arenicola (strain CNS-205), this protein is Cell division protein SepF.